A 65-amino-acid chain; its full sequence is uncharacterized protein (65 aa).

Helical transmembrane passes span 4 to 24 (TIWL…MLYP) and 45 to 65 (FGGG…KTIG).

It localises to the cell membrane. This is an uncharacterized protein from Escherichia coli O157:H7.